The primary structure comprises 208 residues: Small ribosomal subunit protein uS4 (208 aa).

The disordered stretch occupies residues 28–48 (YFEKRPYPPGEHGRARRRTES). An S4 RNA-binding domain is found at 95–159 (MRLDALVLRS…ARTPFQVAAA (65 aa)).

This sequence belongs to the universal ribosomal protein uS4 family. Part of the 30S ribosomal subunit. Contacts protein S5. The interaction surface between S4 and S5 is involved in control of translational fidelity.

One of the primary rRNA binding proteins, it binds directly to 16S rRNA where it nucleates assembly of the body of the 30S subunit. Its function is as follows. With S5 and S12 plays an important role in translational accuracy. The sequence is that of Small ribosomal subunit protein uS4 from Beutenbergia cavernae (strain ATCC BAA-8 / DSM 12333 / CCUG 43141 / JCM 11478 / NBRC 16432 / NCIMB 13614 / HKI 0122).